We begin with the raw amino-acid sequence, 381 residues long: Alkanesulfonate monooxygenase (381 aa).

Belongs to the SsuD family. In terms of assembly, homotetramer.

The enzyme catalyses an alkanesulfonate + FMNH2 + O2 = an aldehyde + FMN + sulfite + H2O + 2 H(+). Catalyzes the desulfonation of aliphatic sulfonates. This chain is Alkanesulfonate monooxygenase, found in Escherichia coli (strain SMS-3-5 / SECEC).